We begin with the raw amino-acid sequence, 175 residues long: Nucleoplasmin-3 (175 aa).

Residue A2 is modified to N-acetylalanine. Residue S16 is modified to Phosphoserine. R27 carries the omega-N-methylarginine modification. Phosphoserine is present on residues S147 and S151.

It belongs to the nucleoplasmin family. Interacts with NPM (via N-terminus). Forms a pentamer with NPM at a ratio 4:1 (NPM3/NPM). Two pentamers form a decamer. Phosphorylated. As to expression, predominantly expressed in testis.

The protein resides in the nucleus. It is found in the nucleolus. Functionally, plays a role in the regulation of diverse cellular processes such as ribosome biogenesis, chromatin remodeling or protein chaperoning. Modulates the histone chaperone function and the RNA-binding activity of nucleolar phosphoprotein B23/NPM. Efficiently mediates chromatin remodeling when included in a pentamer containing NPM3 and NPM. The chain is Nucleoplasmin-3 (Npm3) from Mus musculus (Mouse).